A 288-amino-acid polypeptide reads, in one-letter code: ATP synthase gamma chain (288 aa).

This sequence belongs to the ATPase gamma chain family. In terms of assembly, F-type ATPases have 2 components, CF(1) - the catalytic core - and CF(0) - the membrane proton channel. CF(1) has five subunits: alpha(3), beta(3), gamma(1), delta(1), epsilon(1). CF(0) has three main subunits: a, b and c.

It localises to the cell inner membrane. Its function is as follows. Produces ATP from ADP in the presence of a proton gradient across the membrane. The gamma chain is believed to be important in regulating ATPase activity and the flow of protons through the CF(0) complex. The polypeptide is ATP synthase gamma chain (Actinobacillus pleuropneumoniae serotype 3 (strain JL03)).